Here is a 222-residue protein sequence, read N- to C-terminus: Peptide methionine sulfoxide reductase MsrA (222 aa).

Residue C60 is part of the active site.

Belongs to the MsrA Met sulfoxide reductase family.

The enzyme catalyses L-methionyl-[protein] + [thioredoxin]-disulfide + H2O = L-methionyl-(S)-S-oxide-[protein] + [thioredoxin]-dithiol. It catalyses the reaction [thioredoxin]-disulfide + L-methionine + H2O = L-methionine (S)-S-oxide + [thioredoxin]-dithiol. Functionally, has an important function as a repair enzyme for proteins that have been inactivated by oxidation. Catalyzes the reversible oxidation-reduction of methionine sulfoxide in proteins to methionine. This is Peptide methionine sulfoxide reductase MsrA from Pseudomonas putida (strain GB-1).